We begin with the raw amino-acid sequence, 523 residues long: GMP synthase [glutamine-hydrolyzing] (523 aa).

Positions 8–205 (KILILDFGSQ…VVNICGCETK (198 aa)) constitute a Glutamine amidotransferase type-1 domain. C85 acts as the Nucleophile in catalysis. Active-site residues include H179 and E181. The GMPS ATP-PPase domain maps to 206–398 (WTAENIIEDA…LGLPAEMINR (193 aa)). 233–239 (SGGVDSS) is an ATP binding site.

In terms of assembly, homodimer.

It catalyses the reaction XMP + L-glutamine + ATP + H2O = GMP + L-glutamate + AMP + diphosphate + 2 H(+). Its pathway is purine metabolism; GMP biosynthesis; GMP from XMP (L-Gln route): step 1/1. Functionally, catalyzes the synthesis of GMP from XMP. In Haemophilus influenzae (strain PittGG), this protein is GMP synthase [glutamine-hydrolyzing].